A 320-amino-acid polypeptide reads, in one-letter code: Cytochrome f (320 aa).

A signal peptide spans 1 to 35; the sequence is MQTRNAFSWLKKQITRSISVSLMIYILTRTSISSA. Residues Tyr36, Cys56, Cys59, and His60 each contribute to the heme site. A helical membrane pass occupies residues 286-306; sequence VQGLLFFLASVILAQIFLVLK.

This sequence belongs to the cytochrome f family. As to quaternary structure, the 4 large subunits of the cytochrome b6-f complex are cytochrome b6, subunit IV (17 kDa polypeptide, petD), cytochrome f and the Rieske protein, while the 4 small subunits are PetG, PetL, PetM and PetN. The complex functions as a dimer. It depends on heme as a cofactor.

It is found in the plastid. The protein resides in the chloroplast thylakoid membrane. In terms of biological role, component of the cytochrome b6-f complex, which mediates electron transfer between photosystem II (PSII) and photosystem I (PSI), cyclic electron flow around PSI, and state transitions. This chain is Cytochrome f, found in Solanum bulbocastanum (Wild potato).